Here is a 207-residue protein sequence, read N- to C-terminus: MSPVVATVIFALAAYLIGSISFAVVVSRAMGLADPRTYGSGNPGATNVLRSGNKKAAILTLLGDAAKGGLAVWLAQWLAPRFGVDETGIALVVIAVFLGHLFPVFHRFEGGKGVATAAGILLALNVWLGLATLATWLIIAVFFRYSSLAALVSAVFAPFFYVLMNGFDWIAGAVALMAVLLIARHRANIAKLLAGKESRIGEKKKAA.

Transmembrane regions (helical) follow at residues 4-24, 58-78, 86-106, 120-140, and 162-182; these read VVAT…SFAV, ILTL…AQWL, ETGI…PVFH, ILLA…LIIA, and VLMN…VLLI.

It belongs to the PlsY family. As to quaternary structure, probably interacts with PlsX.

The protein resides in the cell inner membrane. The catalysed reaction is an acyl phosphate + sn-glycerol 3-phosphate = a 1-acyl-sn-glycero-3-phosphate + phosphate. The protein operates within lipid metabolism; phospholipid metabolism. Its function is as follows. Catalyzes the transfer of an acyl group from acyl-phosphate (acyl-PO(4)) to glycerol-3-phosphate (G3P) to form lysophosphatidic acid (LPA). This enzyme utilizes acyl-phosphate as fatty acyl donor, but not acyl-CoA or acyl-ACP. This chain is Glycerol-3-phosphate acyltransferase, found in Ralstonia pickettii (strain 12J).